The sequence spans 76 residues: Brevinin-2ISb (76 aa).

The signal sequence occupies residues 1-22 (MFTMKKSLLVLFFLGTISLSLC). The propeptide at 23-41 (QEERNADEEDGGEATEEEV) is removed in mature form. C70 and C76 are oxidised to a cystine.

Expressed by the skin glands.

The protein localises to the secreted. Has antimicrobial activity against Gram-negative bacterium E.coli ATCC 8739 (MIC=12.5 ug), against Gram positive bacteria S.aureus ATCC 6538 (MIC=6.3 ug) and B.subtilis ATCC 6633 (MIC=25 ug). Has no activity against methicillin-resistant S.aureus ATCC 43300 (MIC= ug) and fungus C.albicans ATCC 90028. The chain is Brevinin-2ISb from Odorrana ishikawae (Ishikawa's frog).